A 235-amino-acid chain; its full sequence is UPF0758 protein COPRO5265_1522 (235 aa).

Residues 109–235 (RITTPEDAIE…HVSLAREKLI (127 aa)) form the MPN domain. 3 residues coordinate Zn(2+): histidine 184, histidine 186, and aspartate 197. A JAMM motif motif is present at residues 184–197 (HNHPSGDPSPSRED).

Belongs to the UPF0758 family.

This Coprothermobacter proteolyticus (strain ATCC 35245 / DSM 5265 / OCM 4 / BT) protein is UPF0758 protein COPRO5265_1522.